The sequence spans 259 residues: Type III pantothenate kinase (259 aa).

Residue Asp6–Thr13 participates in ATP binding. Gly107–Arg110 serves as a coordination point for substrate. The active-site Proton acceptor is Asp109. Asp129 lines the K(+) pocket. Position 132 (Thr132) interacts with ATP. Thr184 lines the substrate pocket.

It belongs to the type III pantothenate kinase family. In terms of assembly, homodimer. Requires NH4(+) as cofactor. It depends on K(+) as a cofactor.

It is found in the cytoplasm. It catalyses the reaction (R)-pantothenate + ATP = (R)-4'-phosphopantothenate + ADP + H(+). The protein operates within cofactor biosynthesis; coenzyme A biosynthesis; CoA from (R)-pantothenate: step 1/5. Its function is as follows. Catalyzes the phosphorylation of pantothenate (Pan), the first step in CoA biosynthesis. The protein is Type III pantothenate kinase of Listeria innocua serovar 6a (strain ATCC BAA-680 / CLIP 11262).